A 172-amino-acid chain; its full sequence is Large ribosomal subunit protein uL10 (172 aa).

This sequence belongs to the universal ribosomal protein uL10 family. Part of the ribosomal stalk of the 50S ribosomal subunit. The N-terminus interacts with L11 and the large rRNA to form the base of the stalk. The C-terminus forms an elongated spine to which L12 dimers bind in a sequential fashion forming a multimeric L10(L12)X complex.

Forms part of the ribosomal stalk, playing a central role in the interaction of the ribosome with GTP-bound translation factors. This Rhizobium johnstonii (strain DSM 114642 / LMG 32736 / 3841) (Rhizobium leguminosarum bv. viciae) protein is Large ribosomal subunit protein uL10.